The sequence spans 284 residues: Four and a half LIM domains protein 5 (284 aa).

A C4-type zinc finger spans residues 8-32 (CQYCTASLLGKKYVLKDDSLFCVTC). 4 LIM zinc-binding domains span residues 39 to 100 (NYCE…ECSS), 101 to 160 (KCFH…KEFA), 161 to 220 (HYCN…LYAN), and 223 to 283 (VACS…MDSD).

As to quaternary structure, interacts with CREM (via the third LIM domain). Interacts (via second LIM domain) with SPAG8.

The protein resides in the nucleus. Functionally, may be involved in the regulation of spermatogenesis. Stimulates CREM transcriptional activity in a phosphorylation-independent manner. In Macaca fascicularis (Crab-eating macaque), this protein is Four and a half LIM domains protein 5 (FHL5).